Here is a 454-residue protein sequence, read N- to C-terminus: Allantoinase (454 aa).

Zn(2+)-binding residues include H58, H60, K149, H189, H245, and D318. K149 bears the N6-carboxylysine mark.

It belongs to the metallo-dependent hydrolases superfamily. Allantoinase family. Homotetramer. Requires Zn(2+) as cofactor. In terms of processing, carboxylation allows a single lysine to coordinate two zinc ions.

The catalysed reaction is (S)-allantoin + H2O = allantoate + H(+). It functions in the pathway nitrogen metabolism; (S)-allantoin degradation; allantoate from (S)-allantoin: step 1/1. Functionally, catalyzes the conversion of allantoin (5-ureidohydantoin) to allantoic acid by hydrolytic cleavage of the five-member hydantoin ring. The polypeptide is Allantoinase (Enterococcus faecalis (strain ATCC 700802 / V583)).